The primary structure comprises 135 residues: Small ribosomal subunit protein eS6 (135 aa).

Belongs to the eukaryotic ribosomal protein eS6 family.

This is Small ribosomal subunit protein eS6 from Halorubrum lacusprofundi (strain ATCC 49239 / DSM 5036 / JCM 8891 / ACAM 34).